A 246-amino-acid polypeptide reads, in one-letter code: Proteolipid protein DM gamma (246 aa).

A run of 4 helical transmembrane segments spans residues 19 to 35, 71 to 87, 118 to 134, and 206 to 222; these read LLAT…FCGC, VIYG…IILL, VFLT…VFGF, and FIVA…ALLI.

This sequence belongs to the myelin proteolipid protein family. In terms of tissue distribution, highly expressed in white matter in myelinating shark brain.

It is found in the membrane. The sequence is that of Proteolipid protein DM gamma from Squalus acanthias (Spiny dogfish).